Consider the following 558-residue polypeptide: NXPE family member 2 (558 aa).

A helical membrane pass occupies residues 17-37; it reads ASARKLFLIVLIIFVFWVVFM.

Belongs to the NXPE family.

The protein localises to the membrane. This is NXPE family member 2 (Nxpe2) from Mus musculus (Mouse).